The following is a 575-amino-acid chain: Bifunctional decalin synthase calF (575 aa).

An N-terminal signal peptide occupies residues 1–18; sequence MSFKPLLLSLSLLSPALG. Residues asparagine 46, asparagine 103, asparagine 127, asparagine 175, asparagine 268, asparagine 308, asparagine 359, asparagine 425, and asparagine 485 are each glycosylated (N-linked (GlcNAc...) asparagine). The region spanning 118-297 is the FAD-binding PCMH-type domain; that stretch reads LGNYASYSIN…LSMTTKVFQD (180 aa).

The protein belongs to the oxygen-dependent FAD-linked oxidoreductase family.

It participates in secondary metabolite biosynthesis. Functionally, bifunctional decaline synthase; part of the gene cluster that mediates the biosynthesis of calbistrin A and related compounds. Calbistrin A is a secondary metabolite with an interesting structure that was recently found to have bioactivity against leukemia cells. It consists of two polyketides linked by an ester bond: a bicyclic decalin containing polyketide and a linear 12 carbon dioic acid structure. The polyketide synthase calA is probably responsible for forming the decalin moiety. Because calA lacks a designated enoylreductase (ER) domain, the required activity is provided by the trans-enoyl reductase calK. Following release from the PKS, calF then probably catalyzes the oxidation and the subsequent Diels Alder cycloisomerization that lead to the formation of the decalin moiety. The decalin polyketide backbone includes two C-methyl groups, at C7 and C11 in backbone, of which the C7 position is probably methylated by the methyltransferase domain of calA. A candidate for adding the methyl group at C11, if not done by CalA, is the cluster methyltransferase calH. Several additional tailoring enzymes within the cluster could be involved in the modification of the decalin polyketide product. Those include the 3 cytochrome P450 monooxygenases CalE, CalG and CalL, of which one might be responsible for the introduction of the extra hydroxyl group attached to the backbone of the decalin moiety, at position C9 in the backbone, that allows for attachment of the linear moiety. One tailoring enzyme activity that is expected to be involved in biosynthesis of calbistrin is an acyltransferase for connecting the two polyketide synthase products, and which could be performed by the cluster acyltransferase calJ. The enzyme responsible for the biosynthesis of the linear moiety, probably a second PKS, has not been identified yet. The protein is Bifunctional decalin synthase calF of Penicillium decumbens.